A 419-amino-acid polypeptide reads, in one-letter code: BTB/POZ domain-containing protein KCTD20 (419 aa).

The BTB domain maps to 117-191 (EKVTLLVDGT…YKTGIINCPD (75 aa)).

Interacts with AKT1; AKT2 and AKT3. Associates with PP2CA. Part of a complex containing MARK4.

It is found in the cytoplasm. In terms of biological role, promotes the phosphorylation of AKT family members. This Homo sapiens (Human) protein is BTB/POZ domain-containing protein KCTD20 (KCTD20).